Here is an 812-residue protein sequence, read N- to C-terminus: MLMTTTTTAMSVSLSHDVIIAAAQRAARAIPPLWPLASSVAVNPFLGQASEPLEMAAARLRRASGIAVTMPRHWYAERLQSGEITEDDLRAPLQNAPAALRPPSLSALRHAIAATRPSPQAIPTVAELARDTAAVDWPGIVNERIGHWAAGYFDQGQALWAVGRSGGAYSTWRIIATHDLTPEIAGLAGFARYVADAPANAEDAIVDCVARLGLSQDALDGYFHRLLTTLGGWGQLGRYRLWQAELSGATDACVTDLLAIRMLWEAALLGNGGCALVPGWRTAIAAYAEPVAATSDDVIDSILQEAAERAAQRKLNAVLAAPSPAQVAAGRVKLQMAFCIDVRSEVFRRALESLDSGIQTLGFAGFFGLGIGHRRFASDVVEARLPVLLAPGVITCAGDATASAAASDLSARIAARAKRAWGRFKLAAISSFAFVEATGPIYVAKLLRDGLALARQHAPNEPAPRPADGLDLETRLTMATRILKAMSFTGGFARLVVLAGHGAKVVNNPHASALHCGACGGYSGEVNARLLASLLNDSQVRAGLAARGIVIPADTLFLAALHDTTTDAVTLYTADHPSPGHAEDLAQAAQWLAAAGALARAERAARLPRAHRSQDIAHRARDWAEIRPEWALAGCQAFIAAPRSRTAGRDLAGRAFLHDYDWRYDDGFGVLELILTAPVVVASWISLQYYGSTVAPESFGAGNKLLHNVTGGIGVVEGNGGILRTGLPWQSVHDGQRLTHEPLRLSVLIEAPPEAIANILERHPQVRALFDNRWLHLFALDDEGLIRPGFRRHSRPSLRVAPFKLYRGQVAS.

4 residues coordinate Zn(2+): cysteine 339, aspartate 341, histidine 501, and cysteine 516.

Belongs to the inorganic carbon transporter (TC 9.A.2) DabA family. Forms a complex with DabB. Requires Zn(2+) as cofactor.

Its subcellular location is the cell inner membrane. Its function is as follows. Part of an energy-coupled inorganic carbon pump. The sequence is that of Probable inorganic carbon transporter subunit DabA from Xanthomonas axonopodis pv. citri (strain 306).